A 165-amino-acid chain; its full sequence is Putative 4-hydroxy-4-methyl-2-oxoglutarate aldolase (165 aa).

Residues 80 to 83 and Arg-102 each bind substrate; that span reads GGNL. Asp-103 contributes to the a divalent metal cation binding site.

It belongs to the class II aldolase/RraA-like family. In terms of assembly, homotrimer. Requires a divalent metal cation as cofactor.

The enzyme catalyses 4-hydroxy-4-methyl-2-oxoglutarate = 2 pyruvate. It carries out the reaction oxaloacetate + H(+) = pyruvate + CO2. Catalyzes the aldol cleavage of 4-hydroxy-4-methyl-2-oxoglutarate (HMG) into 2 molecules of pyruvate. Also contains a secondary oxaloacetate (OAA) decarboxylase activity due to the common pyruvate enolate transition state formed following C-C bond cleavage in the retro-aldol and decarboxylation reactions. In Cupriavidus taiwanensis (strain DSM 17343 / BCRC 17206 / CCUG 44338 / CIP 107171 / LMG 19424 / R1) (Ralstonia taiwanensis (strain LMG 19424)), this protein is Putative 4-hydroxy-4-methyl-2-oxoglutarate aldolase.